A 183-amino-acid polypeptide reads, in one-letter code: Segregation and condensation protein B (183 aa).

This sequence belongs to the ScpB family. In terms of assembly, homodimer. Homodimerization may be required to stabilize the binding of ScpA to the Smc head domains. Component of a cohesin-like complex composed of ScpA, ScpB and the Smc homodimer, in which ScpA and ScpB bind to the head domain of Smc. The presence of the three proteins is required for the association of the complex with DNA.

It localises to the cytoplasm. Functionally, participates in chromosomal partition during cell division. May act via the formation of a condensin-like complex containing Smc and ScpA that pull DNA away from mid-cell into both cell halves. The protein is Segregation and condensation protein B of Streptococcus pyogenes serotype M12 (strain MGAS2096).